The sequence spans 584 residues: (+)-larreatricin hydroxylase, chloroplastic (584 aa).

A chloroplast-targeting transit peptide spans 1–32 (MASLSSQSKLLATPYSFPYHTKPSRVSLRRVS). The N-terminal 47 residues, 33–79 (CKASNDNKDKPNDQEKTFSIDRRNMLIGLGGLYGASNVFPSNQSTLA), are a transit peptide targeting the thylakoid. Cystine bridges form between Cys91–Cys106 and Cys105–Cys168. 6 residues coordinate Cu cation: His167, His188, His197, His319, His323, and His353. The 2'-(S-cysteinyl)-histidine (Cys-His) cross-link spans 171-188 (CNGAYDQVGFPDVNIQVH). Positions 432 to 584 (RLRSKATTTT…KIEFVRDEED (153 aa)) are cleaved as a propeptide — removed in mature form.

The protein belongs to the tyrosinase family. The cofactor is Cu(2+).

The protein localises to the plastid. It is found in the chloroplast thylakoid lumen. It catalyses the reaction (+)-larreatricin + AH2 + O2 = (+)-3'-hydroxylarreatricin + A + H2O. Its function is as follows. Enantio-specific polyphenol oxidase involved in aromatic ring hydroxylation. Involved in the biosynthesis of the creosote bush 8-8' linked lignans. Has a strong preference for the 3' position of (+)-larreatricin. This chain is (+)-larreatricin hydroxylase, chloroplastic, found in Larrea tridentata (Creosote bush).